The following is a 1124-amino-acid chain: Zinc finger E-box-binding homeobox 1 (1124 aa).

Disordered stretches follow at residues 1-124 and 142-163; these read MADG…NHDP and APEE…NGTP. Positions 18 to 30 are enriched in low complexity; it reads NNVTNYNTVVETN. Ser-31 and Ser-33 each carry phosphoserine. Over residues 44-62 the composition is skewed to acidic residues; the sequence is EESVTDAADCEGVPEDDLP. Positions 72–91 are enriched in basic and acidic residues; that stretch reads SSEREGNAKNCWEDDRKEGQ. The segment at 170 to 193 adopts a C2H2-type 1 zinc-finger fold; the sequence is LTCPYCDRGYKRFTSLKEHIKYRH. Residues Lys-186 and Lys-195 each participate in a glycyl lysine isopeptide (Lys-Gly) (interchain with G-Cter in SUMO2) cross-link. C2H2-type zinc fingers lie at residues 200-222 and 240-262; these read FSCS…MTSH and FKCT…LRIH. Residues 268–292 form a C2H2-type 4; atypical zinc finger; that stretch reads YECPNCKKRFSHSGSYSSHISSKKC. A disordered region spans residues 304-327; it reads TGLKTSQCSSPSLSASPGSPTRPQ. A Glycyl lysine isopeptide (Lys-Gly) (interchain with G-Cter in SUMO2) cross-link involves residue Lys-307. Over residues 309 to 322 the composition is skewed to low complexity; it reads SQCSSPSLSASPGS. 2 positions are modified to phosphoserine: Ser-313 and Ser-322. Residues Lys-331 and Lys-335 each participate in a glycyl lysine isopeptide (Lys-Gly) (interchain with G-Cter in SUMO2) cross-link. A Glycyl lysine isopeptide (Lys-Gly) (interchain with G-Cter in SUMO); alternate cross-link involves residue Lys-347. Residue Lys-347 forms a Glycyl lysine isopeptide (Lys-Gly) (interchain with G-Cter in SUMO2); alternate linkage. Residues Lys-439, Lys-493, Lys-504, Lys-515, Lys-548, and Lys-553 each participate in a glycyl lysine isopeptide (Lys-Gly) (interchain with G-Cter in SUMO2) cross-link. Disordered stretches follow at residues 551-586 and 636-714; these read DLKQ…SPSQ and QISV…SSSR. The segment at residues 581–640 is a DNA-binding region (homeobox; atypical); the sequence is NLSPSQPPLKNLLSLLKAYYALNAQPSAEELSKIADSVNLPLDVVKKWFEKMQAGQISVQ. Phosphoserine occurs at positions 642, 679, 686, 693, and 700. A compositionally biased stretch (polar residues) spans 656-687; it reads AKNNDQPQSANANEPQDSTVNLQSPLKMTNSP. Positions 692–714 are enriched in low complexity; that stretch reads GSTTNGSRSSTPSPSPLNLSSSR. Phosphothreonine is present on Thr-702. Ser-704 carries the post-translational modification Phosphoserine. Residue Lys-774 forms a Glycyl lysine isopeptide (Lys-Gly) (interchain with G-Cter in SUMO); alternate linkage. Residue Lys-774 forms a Glycyl lysine isopeptide (Lys-Gly) (interchain with G-Cter in SUMO2); alternate linkage. Residues 856–898 form a disordered region; it reads PPLKVIQPNGNQDERQDTSSEGVSNVEDQNDSDSTPPKKKMRK. Positions 874-890 are enriched in polar residues; it reads SSEGVSNVEDQNDSDST. 2 C2H2-type zinc fingers span residues 904 to 926 and 932 to 954; these read YACD…KYEH and HECG…MRLH. The C2H2-type 7; atypical zinc-finger motif lies at 960–981; the sequence is YQCDKCGKRFSHSGSYSQHMNH. The disordered stretch occupies residues 989–1124; that stretch reads EAEERDSTEQ…QVSEEKTNEA (136 aa). Composition is skewed to acidic residues over residues 1031–1052 and 1062–1084; these read EEDE…ELQE and DEEE…ENEG. The segment covering 1085–1099 has biased composition (basic and acidic residues); it reads EEAKTEGLMKDDRAE. Residues 1100 to 1115 are compositionally biased toward polar residues; sequence SQASSLGQKVGESSEQ.

This sequence belongs to the delta-EF1/ZFH-1 C2H2-type zinc-finger family. As to quaternary structure, interacts (via N-terminus) with SMARCA4/BRG1. In terms of processing, ubiquitinated, leading to degradation in a proteasome-dependent manner. Deubiquitinated by USP51, leading to stabilization. In terms of tissue distribution, colocalizes with SMARCA4/BRG1 in E-cadherin-negative cells from established lines, and stroma of normal colon as well as in de-differentiated epithelial cells at the invasion front of colorectal carcinomas (at protein level). Expressed in heart and skeletal muscle, but not in liver, spleen, or pancreas.

Its subcellular location is the nucleus. Functionally, acts as a transcriptional repressor. Inhibits interleukin-2 (IL-2) gene expression. Enhances or represses the promoter activity of the ATP1A1 gene depending on the quantity of cDNA and on the cell type. Represses E-cadherin promoter and induces an epithelial-mesenchymal transition (EMT) by recruiting SMARCA4/BRG1. Represses BCL6 transcription in the presence of the corepressor CTBP1. Positively regulates neuronal differentiation. Represses RCOR1 transcription activation during neurogenesis. Represses transcription by binding to the E box (5'-CANNTG-3'). In the absence of TGFB1, acts as a repressor of COL1A2 transcription via binding to the E-box in the upstream enhancer region. This chain is Zinc finger E-box-binding homeobox 1, found in Homo sapiens (Human).